Consider the following 169-residue polypeptide: Small ribosomal subunit protein uS5c (169 aa).

The S5 DRBM domain maps to 17-80 (WQERVIQVRR…TDGRKNLINI (64 aa)).

Belongs to the universal ribosomal protein uS5 family. As to quaternary structure, part of the 30S ribosomal subunit. Contacts protein S4.

The protein resides in the plastid. Its subcellular location is the chloroplast. In terms of biological role, with S4 and S12 plays an important role in translational accuracy. The chain is Small ribosomal subunit protein uS5c (rps5) from Guillardia theta (Cryptophyte).